Here is a 357-residue protein sequence, read N- to C-terminus: Peptide chain release factor 1 (357 aa).

N5-methylglutamine is present on Gln236.

The protein belongs to the prokaryotic/mitochondrial release factor family. Post-translationally, methylated by PrmC. Methylation increases the termination efficiency of RF1.

The protein resides in the cytoplasm. In terms of biological role, peptide chain release factor 1 directs the termination of translation in response to the peptide chain termination codons UAG and UAA. The chain is Peptide chain release factor 1 from Mycobacterium ulcerans (strain Agy99).